A 426-amino-acid chain; its full sequence is Serine--tRNA ligase (426 aa).

233 to 235 (TAE) serves as a coordination point for L-serine. Residue 264-266 (RSE) coordinates ATP. Residue glutamate 287 participates in L-serine binding. 351–354 (EISS) is an ATP binding site. An L-serine-binding site is contributed by serine 385.

This sequence belongs to the class-II aminoacyl-tRNA synthetase family. Type-1 seryl-tRNA synthetase subfamily. In terms of assembly, homodimer. The tRNA molecule binds across the dimer.

Its subcellular location is the cytoplasm. The enzyme catalyses tRNA(Ser) + L-serine + ATP = L-seryl-tRNA(Ser) + AMP + diphosphate + H(+). It carries out the reaction tRNA(Sec) + L-serine + ATP = L-seryl-tRNA(Sec) + AMP + diphosphate + H(+). It participates in aminoacyl-tRNA biosynthesis; selenocysteinyl-tRNA(Sec) biosynthesis; L-seryl-tRNA(Sec) from L-serine and tRNA(Sec): step 1/1. Its function is as follows. Catalyzes the attachment of serine to tRNA(Ser). Is also able to aminoacylate tRNA(Sec) with serine, to form the misacylated tRNA L-seryl-tRNA(Sec), which will be further converted into selenocysteinyl-tRNA(Sec). In Brachyspira hyodysenteriae (strain ATCC 49526 / WA1), this protein is Serine--tRNA ligase.